Here is a 92-residue protein sequence, read N- to C-terminus: Exodeoxyribonuclease 7 small subunit (92 aa).

Residues 1–22 (MPKKNAISESTNSTPETAPAMT) are disordered. Residues 7-16 (ISESTNSTPE) are compositionally biased toward polar residues.

Belongs to the XseB family. In terms of assembly, heterooligomer composed of large and small subunits.

The protein resides in the cytoplasm. It carries out the reaction Exonucleolytic cleavage in either 5'- to 3'- or 3'- to 5'-direction to yield nucleoside 5'-phosphates.. Bidirectionally degrades single-stranded DNA into large acid-insoluble oligonucleotides, which are then degraded further into small acid-soluble oligonucleotides. This chain is Exodeoxyribonuclease 7 small subunit, found in Photorhabdus laumondii subsp. laumondii (strain DSM 15139 / CIP 105565 / TT01) (Photorhabdus luminescens subsp. laumondii).